We begin with the raw amino-acid sequence, 586 residues long: Phosphomethylpyrimidine synthase (586 aa).

The tract at residues M1–G58 is disordered. Over residues V22–E39 the composition is skewed to basic and acidic residues. Residues N193, M222, Y251, H287, S307–G309, D348–R351, and E387 each bind substrate. Position 391 (H391) interacts with Zn(2+). Y414 is a binding site for substrate. H455 is a binding site for Zn(2+). [4Fe-4S] cluster is bound by residues C535, C538, and C543.

Belongs to the ThiC family. It depends on [4Fe-4S] cluster as a cofactor.

It carries out the reaction 5-amino-1-(5-phospho-beta-D-ribosyl)imidazole + S-adenosyl-L-methionine = 4-amino-2-methyl-5-(phosphooxymethyl)pyrimidine + CO + 5'-deoxyadenosine + formate + L-methionine + 3 H(+). It participates in cofactor biosynthesis; thiamine diphosphate biosynthesis. In terms of biological role, catalyzes the synthesis of the hydroxymethylpyrimidine phosphate (HMP-P) moiety of thiamine from aminoimidazole ribotide (AIR) in a radical S-adenosyl-L-methionine (SAM)-dependent reaction. The protein is Phosphomethylpyrimidine synthase of Bacillus thuringiensis (strain Al Hakam).